Here is a 176-residue protein sequence, read N- to C-terminus: NAD(P)H-quinone oxidoreductase subunit J (176 aa).

This sequence belongs to the complex I 30 kDa subunit family. As to quaternary structure, NDH-1 can be composed of about 15 different subunits; different subcomplexes with different compositions have been identified which probably have different functions.

It localises to the cellular thylakoid membrane. It catalyses the reaction a plastoquinone + NADH + (n+1) H(+)(in) = a plastoquinol + NAD(+) + n H(+)(out). The catalysed reaction is a plastoquinone + NADPH + (n+1) H(+)(in) = a plastoquinol + NADP(+) + n H(+)(out). NDH-1 shuttles electrons from an unknown electron donor, via FMN and iron-sulfur (Fe-S) centers, to quinones in the respiratory and/or the photosynthetic chain. The immediate electron acceptor for the enzyme in this species is believed to be plastoquinone. Couples the redox reaction to proton translocation, and thus conserves the redox energy in a proton gradient. Cyanobacterial NDH-1 also plays a role in inorganic carbon-concentration. This is NAD(P)H-quinone oxidoreductase subunit J from Prochlorococcus marinus (strain MIT 9515).